A 766-amino-acid polypeptide reads, in one-letter code: AMP deaminase 3 (766 aa).

Phosphoserine occurs at positions 85 and 107. The segment at 89 to 114 (QMPTQQDWKGPPTASPAMSPATPLVP) is disordered. Low complexity predominate over residues 99–110 (PPTASPAMSPAT). Zn(2+) is bound by residues His316 and His318. Substrate contacts are provided by residues His318 and 387-392 (KFNSKY). His585 serves as a coordination point for Zn(2+). Glu588 contacts substrate. Catalysis depends on His607, which acts as the Proton acceptor. Residue Asp662 coordinates Zn(2+). 663–666 (DPMQ) lines the substrate pocket.

Belongs to the metallo-dependent hydrolases superfamily. Adenosine and AMP deaminases family. Homotetramer. Zn(2+) is required as a cofactor. Found in heart, lung brain, spleen, kidney and to a lesser extent in liver.

The catalysed reaction is AMP + H2O + H(+) = IMP + NH4(+). Its pathway is purine metabolism; IMP biosynthesis via salvage pathway; IMP from AMP: step 1/1. AMP deaminase plays a critical role in energy metabolism. The chain is AMP deaminase 3 from Mus musculus (Mouse).